Consider the following 61-residue polypeptide: Metallothionein-1C (61 aa).

The interval M1 to C29 is beta. A divalent metal cation is bound by residues C5, C7, C13, C15, C19, C21, C24, C26, C29, C33, C34, C36, C37, C41, C44, C48, C50, C57, C59, and C60. Positions K30 to A61 are alpha.

It belongs to the metallothionein superfamily. Type 1 family.

Functionally, metallothioneins have a high content of cysteine residues that bind various heavy metals; these proteins are transcriptionally regulated by both heavy metals and glucocorticoids. This chain is Metallothionein-1C (MT1C), found in Ovis aries (Sheep).